The chain runs to 254 residues: Large ribosomal subunit protein uL4 (254 aa).

The protein belongs to the universal ribosomal protein uL4 family. Part of the 50S ribosomal subunit.

Its function is as follows. One of the primary rRNA binding proteins, this protein initially binds near the 5'-end of the 23S rRNA. It is important during the early stages of 50S assembly. It makes multiple contacts with different domains of the 23S rRNA in the assembled 50S subunit and ribosome. Forms part of the polypeptide exit tunnel. This chain is Large ribosomal subunit protein uL4, found in Methanothermobacter thermautotrophicus (strain ATCC 29096 / DSM 1053 / JCM 10044 / NBRC 100330 / Delta H) (Methanobacterium thermoautotrophicum).